The primary structure comprises 549 residues: NADH-quinone oxidoreductase subunit N (549 aa).

The next 14 helical transmembrane spans lie at 26-46 (LSPL…EAFV), 57-77 (ALAM…VGAL), 96-116 (PSLF…LLIA), 148-168 (HTEV…FTAA), 171-191 (FLTM…LCGL), 206-226 (YFLL…MVYG), 253-273 (LLIG…TVPF), 297-317 (LVAA…TTVA), 321-341 (PMLW…AVTQ), 347-367 (LLAY…VAAN), 375-395 (MFYL…VTLV), 421-441 (AASL…SGFI), 466-486 (SAVT…AEPA), and 496-516 (GILT…LGIL).

It belongs to the complex I subunit 2 family. NDH-1 is composed of 14 different subunits. Subunits NuoA, H, J, K, L, M, N constitute the membrane sector of the complex.

The protein resides in the cell membrane. It carries out the reaction a quinone + NADH + 5 H(+)(in) = a quinol + NAD(+) + 4 H(+)(out). Functionally, NDH-1 shuttles electrons from NADH, via FMN and iron-sulfur (Fe-S) centers, to quinones in the respiratory chain. The immediate electron acceptor for the enzyme in this species is believed to be a menaquinone. Couples the redox reaction to proton translocation (for every two electrons transferred, four hydrogen ions are translocated across the cytoplasmic membrane), and thus conserves the redox energy in a proton gradient. The polypeptide is NADH-quinone oxidoreductase subunit N (Thermobifida fusca (strain YX)).